The sequence spans 206 residues: FMN-dependent NADH:quinone oxidoreductase (206 aa).

FMN contacts are provided by residues Ser-9, 15 to 17, and 139 to 142; these read SVS and SRGG.

The protein belongs to the azoreductase type 1 family. As to quaternary structure, homodimer. FMN is required as a cofactor.

The catalysed reaction is 2 a quinone + NADH + H(+) = 2 a 1,4-benzosemiquinone + NAD(+). It carries out the reaction N,N-dimethyl-1,4-phenylenediamine + anthranilate + 2 NAD(+) = 2-(4-dimethylaminophenyl)diazenylbenzoate + 2 NADH + 2 H(+). Its function is as follows. Quinone reductase that provides resistance to thiol-specific stress caused by electrophilic quinones. In terms of biological role, also exhibits azoreductase activity. Catalyzes the reductive cleavage of the azo bond in aromatic azo compounds to the corresponding amines. In Cupriavidus necator (strain ATCC 17699 / DSM 428 / KCTC 22496 / NCIMB 10442 / H16 / Stanier 337) (Ralstonia eutropha), this protein is FMN-dependent NADH:quinone oxidoreductase.